The primary structure comprises 775 residues: MMVQRLGLISPPASQVSTACNQISPSLQRAMNAANLNIPPSDTRSLISRESLASTTLSLTESQSASSMKQEWSQGYRALPSLSNHGSQNGLDLGDLLSLPPGTSMSSNSVSNSLPSYLFGTESSHSPYPSPRHSSTRSHSARSKKRALSLSPLSDGIGIDFNTIIRTSPTSLVAYINGSRASPANLSPQPEVYGHFLGVRGSCIPQPRPVPGSQKGVLVAPGGLALPAYGEDGALEHERMQQLEHGGLQPGLVNHMVVQHGLPGPDSQSAGLFKTERLEEFPGSTVDLPPAPPLPPLPPPPGPPPPYHAHAHLHHPELGPHAQQLALPQATLDDDGEMDGIGGKHCCRWIDCSALYDQQEELVRHIEKVHIDQRKGEDFTCFWAGCPRRYKPFNARYKLLIHMRVHSGEKPNKCTFEGCEKAFSRLENLKIHLRSHTGEKPYLCQHPGCQKAFSNSSDRAKHQRTHLDTKPYACQIPGCTKRYTDPSSLRKHVKAHSSKEQQARKKLRSSTELHPDLLTDCLTVQSLQPATSPRDAAAEGTVGRSPGPGPDLYSAPIFSSNYSSRSGTAAGAVPPPHPVSHPSPGHNVQGSPHNPSSQLPPLTAVDAGAERFAPSAPSPHHISPRRVPAPSSILQRTQPPYTQQPSGSHLKSYQPETNSSFQPNGIHVHGFYGQLQKFCPPHYPDSQRIVPPVSSCSVVPSFEDCLVPTSMGQASFDVFHRAFSTHSGITVYDLPSSSSSLFGESLRSGAEDATFLQISTVDRCPSQLSSVYTEG.

2 disordered regions span residues 121–147 and 282–314; these read TESS…KKRA and PGST…AHLH. The span at 123 to 133 shows a compositional bias: low complexity; sequence SSHSPYPSPRH. A compositionally biased stretch (basic residues) spans 134 to 147; that stretch reads SSTRSHSARSKKRA. Over residues 289 to 307 the composition is skewed to pro residues; that stretch reads PPAPPLPPLPPPPGPPPPY. The C2H2-type 1 zinc finger occupies 345 to 370; that stretch reads HCCRWIDCSALYDQQEELVRHIEKVH. The C2H2-type 2; atypical zinc finger occupies 379-406; it reads FTCFWAGCPRRYKPFNARYKLLIHMRVH. 3 C2H2-type zinc fingers span residues 412-436, 442-466, and 472-496; these read NKCT…LRSH, YLCQ…QRTH, and YACQ…VKAH. Disordered regions lie at residues 485–512 and 529–665; these read DPSS…SSTE and PATS…QPNG. Positions 491–507 match the Bipartite nuclear localization signal motif; the sequence is KHVKAHSSKEQQARKKL. A compositionally biased stretch (basic and acidic residues) spans 497 to 512; the sequence is SSKEQQARKKLRSSTE. Polar residues-rich tracts occupy residues 557–567, 588–600, and 632–663; these read IFSSNYSSRSG, VQGS…SQLP, and SILQ…SFQP.

This sequence belongs to the GLI C2H2-type zinc-finger protein family. In terms of tissue distribution, in the adult, expressed at high levels in the kidney and at lower levels in the brain, skeletal muscle, pancreas, liver, lung, thymus and ovary.

The protein resides in the nucleus. In terms of biological role, acts both as a repressor and an activator of transcription. Binds to the consensus sequence 5'-GACCACCCAC-3'. This chain is Zinc finger protein GLIS3 (GLIS3), found in Homo sapiens (Human).